The sequence spans 329 residues: 4-hydroxy-3-methylbut-2-enyl diphosphate reductase 1 (329 aa).

Cysteine 29 contributes to the [4Fe-4S] cluster binding site. Residues histidine 58 and histidine 95 each coordinate (2E)-4-hydroxy-3-methylbut-2-enyl diphosphate. Histidine 58 and histidine 95 together coordinate dimethylallyl diphosphate. Positions 58 and 95 each coordinate isopentenyl diphosphate. [4Fe-4S] cluster is bound at residue cysteine 117. Histidine 145 is a (2E)-4-hydroxy-3-methylbut-2-enyl diphosphate binding site. Histidine 145 provides a ligand contact to dimethylallyl diphosphate. Histidine 145 contacts isopentenyl diphosphate. The active-site Proton donor is the glutamate 147. (2E)-4-hydroxy-3-methylbut-2-enyl diphosphate is bound at residue threonine 185. Cysteine 215 lines the [4Fe-4S] cluster pocket. (2E)-4-hydroxy-3-methylbut-2-enyl diphosphate contacts are provided by serine 243, serine 244, asparagine 245, and serine 287. The dimethylallyl diphosphate site is built by serine 243, serine 244, asparagine 245, and serine 287. Isopentenyl diphosphate contacts are provided by serine 243, serine 244, asparagine 245, and serine 287.

This sequence belongs to the IspH family. [4Fe-4S] cluster is required as a cofactor.

It catalyses the reaction isopentenyl diphosphate + 2 oxidized [2Fe-2S]-[ferredoxin] + H2O = (2E)-4-hydroxy-3-methylbut-2-enyl diphosphate + 2 reduced [2Fe-2S]-[ferredoxin] + 2 H(+). The catalysed reaction is dimethylallyl diphosphate + 2 oxidized [2Fe-2S]-[ferredoxin] + H2O = (2E)-4-hydroxy-3-methylbut-2-enyl diphosphate + 2 reduced [2Fe-2S]-[ferredoxin] + 2 H(+). The protein operates within isoprenoid biosynthesis; dimethylallyl diphosphate biosynthesis; dimethylallyl diphosphate from (2E)-4-hydroxy-3-methylbutenyl diphosphate: step 1/1. Its pathway is isoprenoid biosynthesis; isopentenyl diphosphate biosynthesis via DXP pathway; isopentenyl diphosphate from 1-deoxy-D-xylulose 5-phosphate: step 6/6. Its function is as follows. Catalyzes the conversion of 1-hydroxy-2-methyl-2-(E)-butenyl 4-diphosphate (HMBPP) into a mixture of isopentenyl diphosphate (IPP) and dimethylallyl diphosphate (DMAPP). Acts in the terminal step of the DOXP/MEP pathway for isoprenoid precursor biosynthesis. This Mycobacterium tuberculosis (strain CDC 1551 / Oshkosh) protein is 4-hydroxy-3-methylbut-2-enyl diphosphate reductase 1.